Reading from the N-terminus, the 553-residue chain is CTP synthase (553 aa).

Residues 1–266 (MTKNYIFITG…DNYICEYFKL (266 aa)) are amidoligase domain. Residue S14 participates in CTP binding. S14 lines the UTP pocket. ATP-binding positions include 15-20 (SLGKGI) and D72. D72 and E140 together coordinate Mg(2+). Residues 147-149 (DIE), 187-192 (KTKPTQ), and K223 each bind CTP. UTP is bound by residues 187–192 (KTKPTQ) and K223. 239 to 241 (KDV) lines the ATP pocket. One can recognise a Glutamine amidotransferase type-1 domain in the interval 291–544 (IIGIIGKYIK…IKSAKKNKKN (254 aa)). G352 contacts L-glutamine. Catalysis depends on C379, which acts as the Nucleophile; for glutamine hydrolysis. Residues 380–383 (LGMQ), E403, and R472 contribute to the L-glutamine site. Catalysis depends on residues H517 and E519.

The protein belongs to the CTP synthase family. In terms of assembly, homotetramer.

The catalysed reaction is UTP + L-glutamine + ATP + H2O = CTP + L-glutamate + ADP + phosphate + 2 H(+). It catalyses the reaction L-glutamine + H2O = L-glutamate + NH4(+). It carries out the reaction UTP + NH4(+) + ATP = CTP + ADP + phosphate + 2 H(+). Its pathway is pyrimidine metabolism; CTP biosynthesis via de novo pathway; CTP from UDP: step 2/2. Allosterically activated by GTP, when glutamine is the substrate; GTP has no effect on the reaction when ammonia is the substrate. The allosteric effector GTP functions by stabilizing the protein conformation that binds the tetrahedral intermediate(s) formed during glutamine hydrolysis. Inhibited by the product CTP, via allosteric rather than competitive inhibition. Functionally, catalyzes the ATP-dependent amination of UTP to CTP with either L-glutamine or ammonia as the source of nitrogen. Regulates intracellular CTP levels through interactions with the four ribonucleotide triphosphates. The chain is CTP synthase from Buchnera aphidicola subsp. Schizaphis graminum (strain Sg).